The following is a 193-amino-acid chain: Glycerol-3-phosphate acyltransferase (193 aa).

4 helical membrane-spanning segments follow: residues 2–22, 76–96, 112–132, and 152–172; these read LIAL…GLIV, VPIH…FPVF, LLFY…VFLF, and CLFV…AFVI.

Belongs to the PlsY family. As to quaternary structure, probably interacts with PlsX.

Its subcellular location is the cell membrane. It catalyses the reaction an acyl phosphate + sn-glycerol 3-phosphate = a 1-acyl-sn-glycero-3-phosphate + phosphate. The protein operates within lipid metabolism; phospholipid metabolism. Functionally, catalyzes the transfer of an acyl group from acyl-phosphate (acyl-PO(4)) to glycerol-3-phosphate (G3P) to form lysophosphatidic acid (LPA). This enzyme utilizes acyl-phosphate as fatty acyl donor, but not acyl-CoA or acyl-ACP. This Bacillus velezensis (strain DSM 23117 / BGSC 10A6 / LMG 26770 / FZB42) (Bacillus amyloliquefaciens subsp. plantarum) protein is Glycerol-3-phosphate acyltransferase.